Reading from the N-terminus, the 688-residue chain is Glycine--tRNA ligase beta subunit (688 aa).

Belongs to the class-II aminoacyl-tRNA synthetase family. As to quaternary structure, tetramer of two alpha and two beta subunits.

It localises to the cytoplasm. The enzyme catalyses tRNA(Gly) + glycine + ATP = glycyl-tRNA(Gly) + AMP + diphosphate. The chain is Glycine--tRNA ligase beta subunit from Aliivibrio salmonicida (strain LFI1238) (Vibrio salmonicida (strain LFI1238)).